Here is a 294-residue protein sequence, read N- to C-terminus: Diaminopimelate epimerase (294 aa).

Residues Asn-11 and Asn-78 each coordinate substrate. Cys-87 (proton donor) is an active-site residue. Substrate contacts are provided by residues 88 to 89 (GN), Asn-167, Asn-203, and 221 to 222 (ER). The Proton acceptor role is filled by Cys-230. 231-232 (GT) provides a ligand contact to substrate.

Belongs to the diaminopimelate epimerase family. As to quaternary structure, homodimer.

The protein localises to the cytoplasm. The enzyme catalyses (2S,6S)-2,6-diaminopimelate = meso-2,6-diaminopimelate. It participates in amino-acid biosynthesis; L-lysine biosynthesis via DAP pathway; DL-2,6-diaminopimelate from LL-2,6-diaminopimelate: step 1/1. Catalyzes the stereoinversion of LL-2,6-diaminopimelate (L,L-DAP) to meso-diaminopimelate (meso-DAP), a precursor of L-lysine and an essential component of the bacterial peptidoglycan. This Mycobacterium avium (strain 104) protein is Diaminopimelate epimerase.